The following is a 152-amino-acid chain: UPF0178 protein SAR0734 (152 aa).

Belongs to the UPF0178 family.

The polypeptide is UPF0178 protein SAR0734 (Staphylococcus aureus (strain MRSA252)).